The chain runs to 369 residues: MIALLIGAGLALLFALVGTPLFIRLLVRKSYGQFIRDDGPTSHHTKRGTPTMGGTVVVFAVLLSYALTHLIMWMMNPRSPGPSASALLLLFLMVGMGLVGFLDDFIKISKQRSLGLDAKAKLVLQGAVGIIFAILALNFPNADGVTPASTQISLVRDIPWLNLAFGGTVLGAILFVLWSNLIVTAATNGVNLTDGLDGLAAGASVMVFGAYTLMGIWQSNQACGSPRQTGGGCYSVRDPLDLALLAAILSAALVGFLWWNTSPAKIFMGDTGSLAIGGAVAGFAILSRTELLLAFIGGLFVLITLSVIIQVGYFKITKGKRFFKMAPLQHHFELKGWAEVTVVVRFWILGGLFVAAGLGIFYAEWVVLL.

10 helical membrane passes run 2-22 (IALL…TPLF), 55-75 (TVVV…MWMM), 86-106 (ALLL…DDFI), 122-142 (LVLQ…FPNA), 158-178 (IPWL…FVLW), 196-216 (LDGL…LMGI), 239-259 (PLDL…FLWW), 266-286 (IFMG…FAIL), 291-311 (LLLA…IIQV), and 348-368 (ILGG…WVVL).

Belongs to the glycosyltransferase 4 family. MraY subfamily. Mg(2+) serves as cofactor.

It is found in the cell membrane. It catalyses the reaction UDP-N-acetyl-alpha-D-muramoyl-L-alanyl-gamma-D-glutamyl-meso-2,6-diaminopimeloyl-D-alanyl-D-alanine + di-trans,octa-cis-undecaprenyl phosphate = di-trans,octa-cis-undecaprenyl diphospho-N-acetyl-alpha-D-muramoyl-L-alanyl-D-glutamyl-meso-2,6-diaminopimeloyl-D-alanyl-D-alanine + UMP. The protein operates within cell wall biogenesis; peptidoglycan biosynthesis. Its function is as follows. Catalyzes the initial step of the lipid cycle reactions in the biosynthesis of the cell wall peptidoglycan: transfers peptidoglycan precursor phospho-MurNAc-pentapeptide from UDP-MurNAc-pentapeptide onto the lipid carrier undecaprenyl phosphate, yielding undecaprenyl-pyrophosphoryl-MurNAc-pentapeptide, known as lipid I. The sequence is that of Phospho-N-acetylmuramoyl-pentapeptide-transferase from Arthrobacter sp. (strain FB24).